A 985-amino-acid polypeptide reads, in one-letter code: Invasin (985 aa).

The segment at 494–594 (SVTVQQPQLT…RQSVDTHFVK (101 aa)) is D1. The Extracellular segment spans residues 494–985 (SVTVQQPQLT…LAFPLCALAI (492 aa)). Big-1 domains are found at residues 503–594 (TLTA…HFVK) and 601–691 (KSTL…VNFT). A D2 region spans residues 595–694 (GTIAADKSTL…SVTVNFTADP (100 aa)). A D3 region spans residues 695-794 (IPDAGRSSFT…LQKKISLFPV (100 aa)). The segment at 795 to 886 (PTLTGILVNG…YSVSYRFYPN (92 aa)) is D4. The integrin-binding stretch occupies residues 795–985 (PTLTGILVNG…LAFPLCALAI (191 aa)). A D5 region spans residues 887 to 985 (RWIYDGGTSL…LAFPLCALAI (99 aa)). The cysteines at positions 906 and 981 are disulfide-linked.

Belongs to the intimin/invasin family.

The protein resides in the cell surface. Its function is as follows. Invasin is a protein that allows enteric bacteria to penetrate cultured mammalian cells. The entry of invasin in the cell is mediated by binding several beta-1 chain integrins. This Yersinia pseudotuberculosis serotype I (strain IP32953) protein is Invasin.